Here is a 799-residue protein sequence, read N- to C-terminus: Target of rapamycin complex 1 subunit TCO89 (799 aa).

Residues 18–41 (NASTVSHQSKPFRQFSTRSRAKSN) are disordered. Residues T52 and T82 each carry the phosphothreonine modification. Phosphoserine occurs at positions 84, 104, 107, 115, and 144. Polar residues predominate over residues 97–126 (NQGKRSASFHSPVHNTLLSPKNSSHSNTGT). Disordered stretches follow at residues 97 to 171 (NQGK…DNIE) and 201 to 284 (LQSP…ADID). Basic and acidic residues predominate over residues 147–156 (DAQESKKSES). The span at 157–170 (TTDEEVECFSEDNI) shows a compositional bias: acidic residues. 2 positions are modified to phosphoserine: S203 and S215. Positions 213-224 (DKSGTDGKENHR) are enriched in basic and acidic residues. Residues 233–243 (LSSNNYFGESS) show a composition bias toward polar residues. Positions 244 to 253 (HSIEHQKDGE) are enriched in basic and acidic residues. The segment covering 254 to 269 (TSPSSIETKLNATSVI) has biased composition (polar residues). Position 290 is a phosphoserine (S290). Positions 324–391 (AHKSNQKPSH…PDDISSAGTK (68 aa)) are disordered. Positions 332–346 (SHSDEQFDQEDHIDA) are enriched in basic and acidic residues. Residues 348 to 363 (RSNSSRKSDSSFMSLR) are compositionally biased toward low complexity. At S397 the chain carries Phosphoserine. Disordered regions lie at residues 418-476 (FENS…QSTF) and 538-568 (NKNSAAPASPLSNEHITSSTNSGSDANRQSN). 2 stretches are compositionally biased toward polar residues: residues 420–429 (NSSSIQNSLG) and 461–476 (GRSQLGQNIPNSQSTF). S575 is subject to Phosphoserine. Residues 663–685 (IRKKSHNDAQSIAHSSSDTDHKD) are disordered. At S707 the chain carries Phosphoserine.

This sequence belongs to the TORC subunit TCO89 family. As to quaternary structure, the target of rapamycin complex 1 (TORC1) is composed of at least KOG1, LST8, TCO89 and either TOR1 (TORC1-A) or TOR2 (TORC1-B). Interacts with PIB2; following activation of PIB2 by glutamine or cysteine. TORC1 binds to and is inhibited by FKBP-rapamycin.

Its subcellular location is the cell membrane. It is found in the vacuole membrane. Functionally, component of TORC1, which regulates multiple cellular processes to control cell growth in response to environmental signals. Nutrient limitation and environmental stress signals cause inactivation of TORC1. Active TORC1 positively controls ribosome biogenesis via control of rRNA, ribosomal protein and tRNA gene expression, and rRNA processing. TORC1 positively controls protein biosynthesis by regulation of mRNA stability, translation initiation factor activity, and high-affinity amino acid permeases that serve to provide amino acids for use by the translation machinery. TORC1 also promotes growth by sequestering a number of nutrient and general stress-responsive transcription factors in the cytoplasm. TORC1 negatively controls macroautophagy, a process to recycle surplus cytoplasmic mass under nutrient starvation conditions. The sequence is that of Target of rapamycin complex 1 subunit TCO89 (TCO89) from Saccharomyces cerevisiae (strain ATCC 204508 / S288c) (Baker's yeast).